The primary structure comprises 292 residues: 4-hydroxy-tetrahydrodipicolinate synthase (292 aa).

Pyruvate is bound at residue Thr45. Residue Tyr133 is the Proton donor/acceptor of the active site. The active-site Schiff-base intermediate with substrate is Lys161. Ile203 serves as a coordination point for pyruvate.

It belongs to the DapA family. Homotetramer; dimer of dimers.

Its subcellular location is the cytoplasm. It carries out the reaction L-aspartate 4-semialdehyde + pyruvate = (2S,4S)-4-hydroxy-2,3,4,5-tetrahydrodipicolinate + H2O + H(+). It participates in amino-acid biosynthesis; L-lysine biosynthesis via DAP pathway; (S)-tetrahydrodipicolinate from L-aspartate: step 3/4. In terms of biological role, catalyzes the condensation of (S)-aspartate-beta-semialdehyde [(S)-ASA] and pyruvate to 4-hydroxy-tetrahydrodipicolinate (HTPA). This chain is 4-hydroxy-tetrahydrodipicolinate synthase, found in Vibrio cholerae serotype O1 (strain ATCC 39541 / Classical Ogawa 395 / O395).